The chain runs to 122 residues: 5'-AMP-activated protein kinase subunit beta-1 (122 aa).

Phosphoserine occurs at positions 5, 61, 66, and 73. The glycogen-binding domain stretch occupies residues 33–122 (EVNDKASAQA…TVNNIIQVKK (90 aa)). A Phosphothreonine modification is found at threonine 113.

The protein belongs to the 5'-AMP-activated protein kinase beta subunit family. AMPK is a heterotrimer of an alpha catalytic subunit (PRKAA1 or PRKAA2), a beta (PRKAB1 or PRKAB2) and a gamma non-catalytic subunits (PRKAG1, PRKAG2 or PRKAG3). Interacts with FNIP1 and FNIP2. Post-translationally, phosphorylated when associated with the catalytic subunit (PRKAA1 or PRKAA2). Phosphorylated by ULK1; leading to negatively regulate AMPK activity and suggesting the existence of a regulatory feedback loop between ULK1 and AMPK.

Non-catalytic subunit of AMP-activated protein kinase (AMPK), an energy sensor protein kinase that plays a key role in regulating cellular energy metabolism. In response to reduction of intracellular ATP levels, AMPK activates energy-producing pathways and inhibits energy-consuming processes: inhibits protein, carbohydrate and lipid biosynthesis, as well as cell growth and proliferation. AMPK acts via direct phosphorylation of metabolic enzymes, and by longer-term effects via phosphorylation of transcription regulators. Also acts as a regulator of cellular polarity by remodeling the actin cytoskeleton; probably by indirectly activating myosin. Beta non-catalytic subunit acts as a scaffold on which the AMPK complex assembles, via its C-terminus that bridges alpha (PRKAA1 or PRKAA2) and gamma subunits (PRKAG1, PRKAG2 or PRKAG3). This is 5'-AMP-activated protein kinase subunit beta-1 (PRKAB1) from Sus scrofa (Pig).